The following is a 446-amino-acid chain: 3',5'-cyclic-AMP phosphodiesterase 7B (446 aa).

A PDEase domain is found at 97–420 (LDEDYLGQAR…AQWKSLLSNQ (324 aa)). Catalysis depends on H173, which acts as the Proton donor. The a divalent metal cation site is built by H177, H213, D214, and D323. The segment at 422–446 (RRRGSGQDLAGPAPETLEQTEGATP) is disordered. At S426 the chain carries Phosphoserine. T445 carries the phosphothreonine modification.

It belongs to the cyclic nucleotide phosphodiesterase family. PDE7 subfamily. Requires a divalent metal cation as cofactor. In terms of tissue distribution, highly expressed in brain.

The catalysed reaction is 3',5'-cyclic AMP + H2O = AMP + H(+). Its pathway is purine metabolism; 3',5'-cyclic AMP degradation; AMP from 3',5'-cyclic AMP: step 1/1. Inhibited by dipyridamole, IBMX and SCH 51866. Insensitive to zaprinast, rolipram, and milrinone. Its function is as follows. Hydrolyzes the second messenger cAMP, which is a key regulator of many important physiological processes. May be involved in the control of cAMP-mediated neural activity and cAMP metabolism in the brain. The polypeptide is 3',5'-cyclic-AMP phosphodiesterase 7B (Mus musculus (Mouse)).